Here is a 315-residue protein sequence, read N- to C-terminus: Methionyl-tRNA formyltransferase (315 aa).

Residue 111-114 (SLLP) coordinates (6S)-5,6,7,8-tetrahydrofolate.

The protein belongs to the Fmt family.

The catalysed reaction is L-methionyl-tRNA(fMet) + (6R)-10-formyltetrahydrofolate = N-formyl-L-methionyl-tRNA(fMet) + (6S)-5,6,7,8-tetrahydrofolate + H(+). In terms of biological role, attaches a formyl group to the free amino group of methionyl-tRNA(fMet). The formyl group appears to play a dual role in the initiator identity of N-formylmethionyl-tRNA by promoting its recognition by IF2 and preventing the misappropriation of this tRNA by the elongation apparatus. The polypeptide is Methionyl-tRNA formyltransferase (Flavobacterium johnsoniae (strain ATCC 17061 / DSM 2064 / JCM 8514 / BCRC 14874 / CCUG 350202 / NBRC 14942 / NCIMB 11054 / UW101) (Cytophaga johnsonae)).